The chain runs to 310 residues: tRNA uridine(34) hydroxylase (310 aa).

A Rhodanese domain is found at 134-232 (DDPDTLLIDT…YFEEVSQSES (99 aa)). The active-site Cysteine persulfide intermediate is C192.

This sequence belongs to the TrhO family.

The enzyme catalyses uridine(34) in tRNA + AH2 + O2 = 5-hydroxyuridine(34) in tRNA + A + H2O. In terms of biological role, catalyzes oxygen-dependent 5-hydroxyuridine (ho5U) modification at position 34 in tRNAs. This chain is tRNA uridine(34) hydroxylase, found in Prochlorococcus marinus (strain MIT 9303).